The following is a 560-amino-acid chain: MLRGTLLCAVLGLLRAQPFPCPPACKCVFRDAAQCSGGDVARISALGLPTNLTHILLFGMGRGVLQSQSFSGMTVLQRLMISDSHISAVAPGTFSDLIKLKTLRLSRNKITHLPGALLDKMVLLEQLFLDHNALRGIDQNMFQKLVNLQELALNQNQLDFLPASLFTNLENLKLLDLSGNNLTHLPKGLLGAQAKLERLLLHSNRLVSLDSGLLNSLGALTELQFHRNHIRSIAPGAFDRLPNLSSLTLSRNHLAFLPSALFLHSHNLTLLTLFENPLAELPGVLFGEMGGLQELWLNRTQLRTLPAAAFRNLSRLRYLGVTLSPRLSALPQGAFQGLGELQVLALHSNGLTALPDGLLRGLGKLRQVSLRRNRLRALPRALFRNLSSLESVQLDHNQLETLPGDVFGALPRLTEVLLGHNSWRCDCGLGPFLGWLRQHLGLVGGEEPPRCAGPGAHAGLPLWALPGGDAECPGPRGPPPRPAADSSSEAPVHPALAPNSSEPWVWAQPVTTGKGQDHSPFWGFYFLLLAVQAMITVIIVFAMIKIGQLFRKLIRERALG.

An N-terminal signal peptide occupies residues 1–16 (MLRGTLLCAVLGLLRA). Positions 17-50 (QPFPCPPACKCVFRDAAQCSGGDVARISALGLPT) constitute an LRRNT domain. Over 17 to 523 (QPFPCPPACK…KGQDHSPFWG (507 aa)) the chain is Extracellular. The N-linked (GlcNAc...) asparagine glycan is linked to Asn51. LRR repeat units follow at residues 75 to 96 (VLQRLMISDSHISAVAPGTFSD), 99 to 120 (KLKTLRLSRNKITHLPGALLDK), 123 to 144 (LLEQLFLDHNALRGIDQNMFQK), 147 to 168 (NLQELALNQNQLDFLPASLFTN), 171 to 193 (NLKLLDLSGNNLTHLPKGLLGAQ), 195 to 216 (KLERLLLHSNRLVSLDSGLLNS), 219 to 240 (ALTELQFHRNHIRSIAPGAFDR), 243 to 264 (NLSSLTLSRNHLAFLPSALFLH), 267 to 288 (NLTLLTLFENPLAELPGVLFGE), 291 to 312 (GLQELWLNRTQLRTLPAAAFRN), 340 to 361 (ELQVLALHSNGLTALPDGLLRG), 364 to 385 (KLRQVSLRRNRLRALPRALFRN), and 388 to 409 (SLESVQLDHNQLETLPGDVFGA). N-linked (GlcNAc...) (complex) asparagine glycosylation occurs at Asn181. N-linked (GlcNAc...) (complex) asparagine glycosylation occurs at Asn243. 3 N-linked (GlcNAc...) asparagine glycosylation sites follow: Asn267, Asn298, and Asn312. N-linked (GlcNAc...) asparagine glycosylation occurs at Asn385. Positions 421 to 474 (NSWRCDCGLGPFLGWLRQHLGLVGGEEPPRCAGPGAHAGLPLWALPGGDAECPG) constitute an LRRCT domain. Positions 469-498 (DAECPGPRGPPPRPAADSSSEAPVHPALAP) are disordered. An N-linked (GlcNAc...) asparagine glycan is attached at Asn499. The chain crosses the membrane as a helical span at residues 524-544 (FYFLLLAVQAMITVIIVFAMI). Topologically, residues 545–560 (KIGQLFRKLIRERALG) are cytoplasmic.

Post-translationally, the N-terminus is blocked. As to expression, platelets and megakaryocytes.

The protein localises to the membrane. The GPIb-V-IX complex functions as the vWF receptor and mediates vWF-dependent platelet adhesion to blood vessels. The adhesion of platelets to injured vascular surfaces in the arterial circulation is a critical initiating event in hemostasis. This is Platelet glycoprotein V (GP5) from Homo sapiens (Human).